We begin with the raw amino-acid sequence, 104 residues long: Protein U9 (104 aa).

The protein is Protein U9 (U9) of Homo sapiens (Human).